Reading from the N-terminus, the 465-residue chain is Lipase 10 (465 aa).

The first 16 residues, 1-16 (MKTLLIFLAFLSSIFA), serve as a signal peptide directing secretion. A disulfide bridge connects residues Cys112 and Cys285. Ser196 functions as the Charge relay system in the catalytic mechanism. 2 N-linked (GlcNAc...) asparagine glycosylation sites follow: Asn231 and Asn319. Active-site charge relay system residues include Asp348 and His381. Cys364 and Cys409 are disulfide-bonded.

Belongs to the AB hydrolase superfamily. Lipase family. Class Lip subfamily.

The protein localises to the secreted. It carries out the reaction a triacylglycerol + H2O = a diacylglycerol + a fatty acid + H(+). Functionally, secreted lipase that is able to hydrolyze both the neutral triacylglycerols and the monopalmitate ester Tween 40, allowing the use of hydrolyzed products as carbon sources. Has broad lipolytic activity, which may be important for colonization and subsequent infection, therefore contributing to the persistence and virulence in human tissue. The protein is Lipase 10 of Candida albicans (strain SC5314 / ATCC MYA-2876) (Yeast).